Here is a 268-residue protein sequence, read N- to C-terminus: Calpain small subunit 1 (268 aa).

M1 bears the N-acetylmethionine mark. Position 6 is a phosphoserine (S6). The 35-residue stretch at 96-130 folds into the EF-hand 1; atypical domain; it reads EEVRQFRKLFVQLAGDDMEVSATELMNILNKVVTR. Residues A109, D112, E114, E119, D137, D152, D154, T156, K158, and E163 each coordinate Ca(2+). EF-hand domains are found at residues 139–172, 169–204, 205–233, and 234–268; these read FGIDTCRSMVAVMDSDTTGKLGFEEFKYLWNNIK, NNIKKWQAIYKRFDTDRSGTIGSHELPGAFEAAGFH, LNEHLYSMIIRRYADESGNMDFDNFISCL, and VRLDAMFRAFKSLDKNGTGQIQVNIQEWLQLTMYS. An N6-acetyllysine modification is found at K179. The Ca(2+) site is built by D182, D184, S186, T188, E193, and D225.

In terms of assembly, homodimer or heterodimer of a large (catalytic) and a small (regulatory) subunit. In presence of calcium, the heterodimer dissociates.

Its subcellular location is the cytoplasm. The protein localises to the cell membrane. Its function is as follows. Regulatory subunit of the calcium-regulated non-lysosomal thiol-protease which catalyzes limited proteolysis of substrates involved in cytoskeletal remodeling and signal transduction. Essential for embryonic development. This chain is Calpain small subunit 1 (Capns1), found in Mus musculus (Mouse).